The chain runs to 398 residues: Succinate--CoA ligase [ADP-forming] subunit beta (398 aa).

Residues 9–254 (KALLKSFGAP…KTEEDAKEIE (246 aa)) form the ATP-grasp domain. ATP contacts are provided by residues Lys46, 53-55 (GRG), Glu109, Ala112, and Glu117. Positions 209 and 223 each coordinate Mg(2+). Substrate is bound by residues Asn274 and 331-333 (GIM).

Belongs to the succinate/malate CoA ligase beta subunit family. In terms of assembly, heterotetramer of two alpha and two beta subunits. Requires Mg(2+) as cofactor.

The enzyme catalyses succinate + ATP + CoA = succinyl-CoA + ADP + phosphate. It catalyses the reaction GTP + succinate + CoA = succinyl-CoA + GDP + phosphate. Its pathway is carbohydrate metabolism; tricarboxylic acid cycle; succinate from succinyl-CoA (ligase route): step 1/1. Succinyl-CoA synthetase functions in the citric acid cycle (TCA), coupling the hydrolysis of succinyl-CoA to the synthesis of either ATP or GTP and thus represents the only step of substrate-level phosphorylation in the TCA. The beta subunit provides nucleotide specificity of the enzyme and binds the substrate succinate, while the binding sites for coenzyme A and phosphate are found in the alpha subunit. The chain is Succinate--CoA ligase [ADP-forming] subunit beta from Allorhizobium ampelinum (strain ATCC BAA-846 / DSM 112012 / S4) (Agrobacterium vitis (strain S4)).